We begin with the raw amino-acid sequence, 245 residues long: tRNA pseudouridine synthase A (245 aa).

D52 serves as the catalytic Nucleophile. Substrate is bound at residue Y111.

This sequence belongs to the tRNA pseudouridine synthase TruA family. In terms of assembly, homodimer.

It carries out the reaction uridine(38/39/40) in tRNA = pseudouridine(38/39/40) in tRNA. In terms of biological role, formation of pseudouridine at positions 38, 39 and 40 in the anticodon stem and loop of transfer RNAs. This Rhodopseudomonas palustris (strain BisB5) protein is tRNA pseudouridine synthase A.